The sequence spans 501 residues: MATVIPGDLSEVRDTQKVPSGKRKRGETKPRKNFPCQLCDKAFNSVEKLKVHSYSHTGERPYKCTQQDCTKAFVSKYKLLRHMATHSPEKTHKCNYCEKMFHRKDHLKNHLHTHNPNKEAFKCEECGKNYNTKLGFKRHLALHAATSGDLTCKVCLQTFESTGVLLEHLKTHAGKSSGGVKEKKHQCEHCDRRFYTRKDVRRHMVVHTGRKDFLCQYCAQRFGRKDHLTRHMKKSHNQELLKVKTEPMDLLDPFTCNVSVPIKDELLPVMSLPSSELTSKPFTNTLQLNLYNTQIQSMQSSASAHQMVATSLPLGMPCPIDMESVHPSHQLSLKYPLSSTSYAVSMPEKEQPLKGEIESYLMELQSGMPSSSQDSQASSSKLGLDPQVGPLDDGSGEVSLSKGSVPISEPLNTPSLDFSQLFNFIPVNGPPYNPSVSVGNLGMSYTQEEAHSSMTQLPPQTQDPQDPSNSIGLGSLHSLSAAFTSSLSTTTTLPRFHQAFQ.

The disordered stretch occupies residues 1 to 30; that stretch reads MATVIPGDLSEVRDTQKVPSGKRKRGETKP. A Nuclear localization signal motif is present at residues 22–25; that stretch reads KRKR. 7 consecutive C2H2-type zinc fingers follow at residues 34–56, 62–86, 92–114, 121–143, 150–172, 185–207, and 213–236; these read FPCQLCDKAFNSVEKLKVHSYSH, YKCTQQDCTKAFVSKYKLLRHMATH, HKCNYCEKMFHRKDHLKNHLHTH, FKCEECGKNYNTKLGFKRHLALH, LTCKVCLQTFESTGVLLEHLKTH, HQCEHCDRRFYTRKDVRRHMVVH, and FLCQYCAQRFGRKDHLTRHMKKSH. Composition is skewed to low complexity over residues 366–380 and 455–467; these read SGMPSSSQDSQASSS and TQLPPQTQDPQDP. 2 disordered regions span residues 366–406 and 447–474; these read SGMP…GSVP and QEEAHSSMTQLPPQTQDPQDPSNSIGLG.

It belongs to the krueppel C2H2-type zinc-finger protein family. In terms of tissue distribution, expressed in nephroblastoma.

It localises to the nucleus. Functionally, transcription factor and proto-oncogene whose activation results in up-regulation of target genes, such as IGFII, leading to uncontrolled cell proliferation. The protein is Zinc finger protein PLAG1 (PLAG1) of Gallus gallus (Chicken).